The chain runs to 261 residues: Phosphatidylglycerol--prolipoprotein diacylglyceryl transferase (261 aa).

7 helical membrane passes run 19 to 39 (VHWYGLMYLVGFAMAWGLALY), 56 to 76 (LIFYGALGLIIGGRLGYMLFY), 92 to 112 (WRGGMSFHGGLIGVIVTTWIF), 126 to 146 (FVVPLVPLGLAAGRIGNFING), 173 to 193 (QLYEFLLEGVLLFIVIWWFSA), 199 to 219 (FAVSSLFLLCYGLFRFTAEFF), and 227 to 247 (GFVAFGWLTRGQELSLPMIII). Position 139 (Arg139) interacts with a 1,2-diacyl-sn-glycero-3-phospho-(1'-sn-glycerol).

The protein belongs to the Lgt family.

Its subcellular location is the cell inner membrane. It carries out the reaction L-cysteinyl-[prolipoprotein] + a 1,2-diacyl-sn-glycero-3-phospho-(1'-sn-glycerol) = an S-1,2-diacyl-sn-glyceryl-L-cysteinyl-[prolipoprotein] + sn-glycerol 1-phosphate + H(+). Its pathway is protein modification; lipoprotein biosynthesis (diacylglyceryl transfer). In terms of biological role, catalyzes the transfer of the diacylglyceryl group from phosphatidylglycerol to the sulfhydryl group of the N-terminal cysteine of a prolipoprotein, the first step in the formation of mature lipoproteins. The protein is Phosphatidylglycerol--prolipoprotein diacylglyceryl transferase of Coxiella burnetii (strain CbuK_Q154) (Coxiella burnetii (strain Q154)).